The chain runs to 86 residues: Alpha-mammal toxin Ts3 (86 aa).

An N-terminal signal peptide occupies residues 1-19; it reads MNYFILLVVVCLLTAGTEG. An LCN-type CS-alpha/beta domain is found at 21 to 82; sequence KDGYPVEYDN…EPTKTNGKCK (62 aa). 4 disulfide bridges follow: Cys-31-Cys-81, Cys-35-Cys-57, Cys-43-Cys-64, and Cys-47-Cys-66. A Serine amide modification is found at Ser-83.

In terms of tissue distribution, expressed by the venom gland.

It localises to the secreted. Its function is as follows. Alpha toxins bind voltage-independently at site-3 of sodium channels (Nav) and inhibit the inactivation of the activated channels, thereby blocking neuronal transmission. This synthetic toxin inhibits inactivation of rat Nav1.4/SCN4A (when tested at 201 nM). In addition, it has been shown to cause a persistent sodium channel activation in nitrergic inhibitory fibers innervating the rabbit corpus cavernosum, resulting in NO release and cavernosal smooth muscle relaxation. This toxin is active against mammals. This synthetic peptide with a Ser at position 31 (C12S) acts as a bradykinin-potentiating peptide (BPP). Induces endothelium-dependent vasodilation that is reverted by NO synthase inhibitor, suggesting it activates molecular targets on vascular endothelium leading to NO production and vasodilation. It appears to induce vasodilation through muscarinic acetylcholine receptors (AChR) M2 (CHRM2) and M3 (CHRM3). Does not inhibit the angiotensin-converting enzyme (ACE). Does not act via bradykinin B2 receptor. This is Alpha-mammal toxin Ts3 from Tityus serrulatus (Brazilian scorpion).